The primary structure comprises 61 residues: UPF0434 protein PFL_1779 (61 aa).

This sequence belongs to the UPF0434 family.

The sequence is that of UPF0434 protein PFL_1779 from Pseudomonas fluorescens (strain ATCC BAA-477 / NRRL B-23932 / Pf-5).